The following is a 350-amino-acid chain: UDP-3-O-acylglucosamine N-acyltransferase (350 aa).

His244 serves as the catalytic Proton acceptor.

This sequence belongs to the transferase hexapeptide repeat family. LpxD subfamily. Homotrimer.

It carries out the reaction a UDP-3-O-[(3R)-3-hydroxyacyl]-alpha-D-glucosamine + a (3R)-hydroxyacyl-[ACP] = a UDP-2-N,3-O-bis[(3R)-3-hydroxyacyl]-alpha-D-glucosamine + holo-[ACP] + H(+). Its pathway is bacterial outer membrane biogenesis; LPS lipid A biosynthesis. In terms of biological role, catalyzes the N-acylation of UDP-3-O-acylglucosamine using 3-hydroxyacyl-ACP as the acyl donor. Is involved in the biosynthesis of lipid A, a phosphorylated glycolipid that anchors the lipopolysaccharide to the outer membrane of the cell. The chain is UDP-3-O-acylglucosamine N-acyltransferase from Janthinobacterium sp. (strain Marseille) (Minibacterium massiliensis).